Reading from the N-terminus, the 152-residue chain is MANKFVITWDNMQMYTRQLAEQLLPADQWKGILAVSRGGLVPAAILARELNIRHVDTVCISSYDHDHQRDMTVVKAMEGDGEGFIIIDDLVDSGDTAVKLREMYPKGKLVTVCAKPAGVHLVDAYVVDIPQDTWIEQPWDMAVTYVDPIAKK.

5-phospho-alpha-D-ribose 1-diphosphate-binding positions include 37-38, Arg69, and 88-96; these read RG and DDLVDSGDT. Arg69 is a binding site for GMP. Mg(2+) is bound at residue Asp89. Guanine is bound by residues Asp92 and Ile135. The xanthine site is built by Asp92 and Ile135. Residues 92-96 and 134-135 each bind GMP; these read DSGDT and WI.

It belongs to the purine/pyrimidine phosphoribosyltransferase family. XGPT subfamily. As to quaternary structure, homotetramer. Requires Mg(2+) as cofactor.

Its subcellular location is the cell inner membrane. It carries out the reaction GMP + diphosphate = guanine + 5-phospho-alpha-D-ribose 1-diphosphate. The enzyme catalyses XMP + diphosphate = xanthine + 5-phospho-alpha-D-ribose 1-diphosphate. The catalysed reaction is IMP + diphosphate = hypoxanthine + 5-phospho-alpha-D-ribose 1-diphosphate. The protein operates within purine metabolism; GMP biosynthesis via salvage pathway; GMP from guanine: step 1/1. It functions in the pathway purine metabolism; XMP biosynthesis via salvage pathway; XMP from xanthine: step 1/1. Its function is as follows. Purine salvage pathway enzyme that catalyzes the transfer of the ribosyl-5-phosphate group from 5-phospho-alpha-D-ribose 1-diphosphate (PRPP) to the N9 position of the 6-oxopurines guanine and xanthine to form the corresponding ribonucleotides GMP (guanosine 5'-monophosphate) and XMP (xanthosine 5'-monophosphate), with the release of PPi. To a lesser extent, also acts on hypoxanthine. The sequence is that of Xanthine-guanine phosphoribosyltransferase from Aliivibrio fischeri (strain ATCC 700601 / ES114) (Vibrio fischeri).